A 118-amino-acid polypeptide reads, in one-letter code: Phosphoribosyl-AMP cyclohydrolase (118 aa).

Residue Asp87 participates in Mg(2+) binding. Cys88 is a Zn(2+) binding site. 2 residues coordinate Mg(2+): Asp89 and Asp91. Residues Cys104 and Cys111 each coordinate Zn(2+).

Belongs to the PRA-CH family. Homodimer. Requires Mg(2+) as cofactor. It depends on Zn(2+) as a cofactor.

The protein resides in the cytoplasm. The enzyme catalyses 1-(5-phospho-beta-D-ribosyl)-5'-AMP + H2O = 1-(5-phospho-beta-D-ribosyl)-5-[(5-phospho-beta-D-ribosylamino)methylideneamino]imidazole-4-carboxamide. The protein operates within amino-acid biosynthesis; L-histidine biosynthesis; L-histidine from 5-phospho-alpha-D-ribose 1-diphosphate: step 3/9. Catalyzes the hydrolysis of the adenine ring of phosphoribosyl-AMP. This Corynebacterium glutamicum (strain R) protein is Phosphoribosyl-AMP cyclohydrolase.